A 311-amino-acid polypeptide reads, in one-letter code: Malate dehydrogenase (311 aa).

Residues 7 to 12 (GAGNVG) and D32 contribute to the NAD(+) site. Substrate contacts are provided by R82 and R88. Residues N95 and 118-120 (VSN) contribute to the NAD(+) site. The substrate site is built by N120 and R151. H175 serves as the catalytic Proton acceptor.

Belongs to the LDH/MDH superfamily. MDH type 3 family.

It carries out the reaction (S)-malate + NAD(+) = oxaloacetate + NADH + H(+). Catalyzes the reversible oxidation of malate to oxaloacetate. The chain is Malate dehydrogenase from Flavobacterium johnsoniae (strain ATCC 17061 / DSM 2064 / JCM 8514 / BCRC 14874 / CCUG 350202 / NBRC 14942 / NCIMB 11054 / UW101) (Cytophaga johnsonae).